Here is a 335-residue protein sequence, read N- to C-terminus: Glycerol-3-phosphate dehydrogenase [NAD(P)+] (335 aa).

NADPH-binding residues include Ser-12, Trp-13, Arg-33, Arg-34, and Lys-107. Lys-107, Gly-134, and Ser-136 together coordinate sn-glycerol 3-phosphate. Ala-138 is a binding site for NADPH. Lys-189, Asp-242, Ser-252, Arg-253, and Asn-254 together coordinate sn-glycerol 3-phosphate. Lys-189 functions as the Proton acceptor in the catalytic mechanism. Residue Arg-253 coordinates NADPH. NADPH is bound by residues Val-277 and Glu-279.

It belongs to the NAD-dependent glycerol-3-phosphate dehydrogenase family.

It is found in the cytoplasm. It catalyses the reaction sn-glycerol 3-phosphate + NAD(+) = dihydroxyacetone phosphate + NADH + H(+). The catalysed reaction is sn-glycerol 3-phosphate + NADP(+) = dihydroxyacetone phosphate + NADPH + H(+). It participates in membrane lipid metabolism; glycerophospholipid metabolism. Its function is as follows. Catalyzes the reduction of the glycolytic intermediate dihydroxyacetone phosphate (DHAP) to sn-glycerol 3-phosphate (G3P), the key precursor for phospholipid synthesis. In Moorella thermoacetica (strain ATCC 39073 / JCM 9320), this protein is Glycerol-3-phosphate dehydrogenase [NAD(P)+].